Reading from the N-terminus, the 400-residue chain is Ribosomal RNA large subunit methyltransferase I (400 aa).

In terms of domain architecture, PUA spans 6-84; that stretch reads FPRLVLAKGR…NEAIDSAFFE (79 aa).

This sequence belongs to the methyltransferase superfamily. RlmI family.

It is found in the cytoplasm. The catalysed reaction is cytidine(1962) in 23S rRNA + S-adenosyl-L-methionine = 5-methylcytidine(1962) in 23S rRNA + S-adenosyl-L-homocysteine + H(+). Specifically methylates the cytosine at position 1962 (m5C1962) of 23S rRNA. This Klebsiella pneumoniae subsp. pneumoniae (strain ATCC 700721 / MGH 78578) protein is Ribosomal RNA large subunit methyltransferase I.